The following is a 590-amino-acid chain: Pescadillo homolog (590 aa).

Residues 332–422 enclose the BRCT domain; that stretch reads VCKSLFKDLK…IILPTEKYLV (91 aa). The segment at 561–590 is disordered; it reads AMKISQSRKRSGVEIIEQRKKRLNDTQPSS.

It belongs to the pescadillo family. Interacts with BOP1 and WDR12. Interacts with NSN1. Expressed in shoot and root apical meristems, epidermal cells and vasculature of developing leaves, trichome progenitor cells, young flowers, developing pollen grains and ovules, and mature pollen grains.

It localises to the nucleus. The protein localises to the nucleolus. Its subcellular location is the nucleoplasm. Functionally, required for maturation of ribosomal RNAs and formation of the large ribosomal subunit. Plays an essential role in cell growth and survival through its regulation of ribosome biogenesis and mitotic progression. Required for normal root cell growth and differentiation. The protein is Pescadillo homolog of Arabidopsis thaliana (Mouse-ear cress).